We begin with the raw amino-acid sequence, 468 residues long: Tissue alpha-L-fucosidase (468 aa).

The signal sequence occupies residues 1–29; sequence MRAPGERWRPAGAALWLLLLLLLLGATES. Threonine 172 carries the post-translational modification Phosphothreonine. Asparagine 243, asparagine 270, and asparagine 384 each carry an N-linked (GlcNAc...) asparagine glycan.

This sequence belongs to the glycosyl hydrolase 29 family. In terms of assembly, homotetramer.

It is found in the lysosome. It catalyses the reaction an alpha-L-fucoside + H2O = L-fucose + an alcohol. It carries out the reaction a neolactoside IV(2)-alpha-Fuc-nLc4Cer(d18:1(4E)) + H2O = a neolactoside nLc4Cer(d18:1(4E)) + L-fucose. The enzyme catalyses a neolactoside IV(2)-alpha-Fuc-nLc4Cer(d18:0) + H2O = a neolactoside nLc4Cer(d18:0) + L-fucose. Functionally, alpha-L-fucosidase is responsible for hydrolyzing the alpha-1,6-linked fucose joined to the reducing-end N-acetylglucosamine of the carbohydrate moieties of glycoproteins. The sequence is that of Tissue alpha-L-fucosidase (FUCA1) from Macaca fascicularis (Crab-eating macaque).